A 353-amino-acid polypeptide reads, in one-letter code: MTQGQKVSVGIVGASGYGGVQLVRLLKEHPLVELAYLGGDSSAGKPYSDLYPHLGHSINLNVEAIDLEIIASRCQVVFLGLPNGLACDLAPPLLAKGCKVLDLSADYRFTSLDTYSKWYGKERQDQAIASTAVYGLPELYREDIKNASLIGCPGCYPTASLMAISPLLKQGLIVPETTIIDAKSGTSGGGRQAKINMLLAEADSSIGAYNVAGKHRHTPEIEQICGDLAGHEVRVQFTPHLMPMVRGILSTVYATLRDPNLVRDDLITIYNAFYRASPFVKILPGGVYPQTKWACGTNLCYLGIEVDPRTDRVIVMSAIDNLVKGQSGQAVQCLNLMMGWEESLALPQMCFYP.

The active site involves Cys-155.

It belongs to the NAGSA dehydrogenase family. Type 1 subfamily.

The protein localises to the cytoplasm. The catalysed reaction is N-acetyl-L-glutamate 5-semialdehyde + phosphate + NADP(+) = N-acetyl-L-glutamyl 5-phosphate + NADPH + H(+). It participates in amino-acid biosynthesis; L-arginine biosynthesis; N(2)-acetyl-L-ornithine from L-glutamate: step 3/4. Functionally, catalyzes the NADPH-dependent reduction of N-acetyl-5-glutamyl phosphate to yield N-acetyl-L-glutamate 5-semialdehyde. This is N-acetyl-gamma-glutamyl-phosphate reductase from Microcystis aeruginosa (strain NIES-843 / IAM M-2473).